The following is a 60-amino-acid chain: UPF0434 protein PM0859 (60 aa).

It belongs to the UPF0434 family.

The sequence is that of UPF0434 protein PM0859 from Pasteurella multocida (strain Pm70).